The following is a 224-amino-acid chain: Phosphoglycolate phosphatase (224 aa).

Catalysis depends on Asp11, which acts as the Nucleophile. The Mg(2+) site is built by Asp11, Asp13, and Asp177.

It belongs to the HAD-like hydrolase superfamily. CbbY/CbbZ/Gph/YieH family. It depends on Mg(2+) as a cofactor.

It carries out the reaction 2-phosphoglycolate + H2O = glycolate + phosphate. The protein operates within organic acid metabolism; glycolate biosynthesis; glycolate from 2-phosphoglycolate: step 1/1. Its function is as follows. Specifically catalyzes the dephosphorylation of 2-phosphoglycolate. Is involved in the dissimilation of the intracellular 2-phosphoglycolate formed during the DNA repair of 3'-phosphoglycolate ends, a major class of DNA lesions induced by oxidative stress. The chain is Phosphoglycolate phosphatase from Haemophilus influenzae (strain ATCC 51907 / DSM 11121 / KW20 / Rd).